Consider the following 892-residue polypeptide: Protein CLEC16A homolog (892 aa).

Positions 48-194 (LRAIAEILIW…AVRNILLNIV (147 aa)) constitute an FPL domain. Over residues 844–856 (SVRKTVSTSSSSS) the composition is skewed to low complexity. Positions 844-892 (SVRKTVSTSSSSSQGRPGHYSANLRSASRNAGMIPDDPTQPSSSSERRS) are disordered. The segment covering 882 to 892 (TQPSSSSERRS) has biased composition (polar residues).

This sequence belongs to the CLEC16A/gop-1 family.

In terms of biological role, regulator of mitophagy. This is Protein CLEC16A homolog (gop-1) from Caenorhabditis elegans.